A 261-amino-acid polypeptide reads, in one-letter code: Small ribosomal subunit protein uS2 (261 aa).

The segment at 223 to 261 (EGKQGQDDSEDVEKEMADKAAAEDDEEESIEVVVEKSED) is disordered.

Belongs to the universal ribosomal protein uS2 family.

The sequence is that of Small ribosomal subunit protein uS2 from Lactobacillus johnsonii (strain CNCM I-12250 / La1 / NCC 533).